The chain runs to 353 residues: Aliphatic aldoxime dehydratase (353 aa).

An aliphatic aldoxime is bound at residue Ser219. His299 contributes to the heme b binding site. His320 is a binding site for an aliphatic aldoxime. His320 is an active-site residue.

It belongs to the heme-containing dehydratase family. In terms of assembly, homodimer. Heme b serves as cofactor.

The catalysed reaction is an aliphatic aldoxime = a nitrile + H2O. With respect to regulation, active when the heme iron is in the ferrous state. The activity is enhanced by reducing agents, such as Na(2)S, Na(2)S(2)(O4), 2-mercaptoethanol, and L-cysteine and supplementary additions of electron acceptors such as flavins, sulfite ion, and vitamin K3. The effect of various chemicals on the enzyme activity is different in the presence and absence of the reducing reagent, Na(2)S, which acts not only as a reductant but also changes the substrate specificity of the enzyme. Catalyzes the dehydration of aldoximes to their corresponding nitrile. Is active toward various arylalkyl- and alkyl-aldoximes, and to a lesser extent toward aryl-aldoximes. This is Aliphatic aldoxime dehydratase from Rhodococcus erythropolis (Arthrobacter picolinophilus).